A 96-amino-acid polypeptide reads, in one-letter code: Teretoxin Tgu6.1 (96 aa).

The first 16 residues, 1–16, serve as a signal peptide directing secretion; the sequence is MRPFLVFVLIVSVSLA. Positions 17–52 are excised as a propeptide; that stretch reads FSFEDMPNKGGDSVASITADQARGHKRNPLFPFAQR.

Post-translationally, contains 3 disulfide bonds. As to expression, expressed by the venom duct.

It is found in the secreted. In terms of biological role, the recombinant protein causes paralysis to polychaete worms (Nereis virens), the natural prey of terebrid snails. This is Teretoxin Tgu6.1 from Terebra guttata (White spotted auger snail).